The following is a 115-amino-acid chain: Large ribosomal subunit protein bL19 (115 aa).

It belongs to the bacterial ribosomal protein bL19 family.

In terms of biological role, this protein is located at the 30S-50S ribosomal subunit interface and may play a role in the structure and function of the aminoacyl-tRNA binding site. This is Large ribosomal subunit protein bL19 from Yersinia pseudotuberculosis serotype O:1b (strain IP 31758).